Here is a 337-residue protein sequence, read N- to C-terminus: Pentalenene synthase (337 aa).

Mg(2+)-binding residues include D80 and D84. Positions 80 to 84 (DDLFD) match the DDXXD motif motif. A disulfide bridge links C128 with C136. Mg(2+) is bound by residues N219, S223, and E227.

It belongs to the terpene synthase family. In terms of assembly, monomer. Requires Mg(2+) as cofactor.

It carries out the reaction (2E,6E)-farnesyl diphosphate = pentalenene + diphosphate. It participates in sesquiterpene biosynthesis; pentalenene biosynthesis; pentalenene from farnesyl diphosphate: step 1/1. Its pathway is antibiotic biosynthesis; pentalenolactone biosynthesis. Its function is as follows. Catalyzes the cyclization of farnesyl diphosphate (FPP) to the tricyclic sesquiterpene pentalenene, which is the hydrocarbon precursor of the pentalenolactone family of antibiotics produced by a variety of Streptomyces species. The sequence is that of Pentalenene synthase (penA) from Streptomyces exfoliatus (Streptomyces hydrogenans).